A 151-amino-acid polypeptide reads, in one-letter code: Exosporium protein B (151 aa).

The protein localises to the spore wall. This chain is Exosporium protein B, found in Clostridium sporogenes (strain ATCC 15579).